Reading from the N-terminus, the 111-residue chain is MIIGVGIDVVSIDRFQAKKSDEFIKKLLTEHEQNKYKTVIGESNQNIFLAIRWSLKEAIFKALKTWDEFTQLEIRKIHGAYECSLNEKIKLHLSISHEGQRLVAMAVAERI.

Residues D8 and E57 each contribute to the Mg(2+) site.

The protein belongs to the P-Pant transferase superfamily. AcpS family. Mg(2+) is required as a cofactor.

The protein resides in the cytoplasm. It carries out the reaction apo-[ACP] + CoA = holo-[ACP] + adenosine 3',5'-bisphosphate + H(+). In terms of biological role, transfers the 4'-phosphopantetheine moiety from coenzyme A to a Ser of acyl-carrier-protein. The chain is Holo-[acyl-carrier-protein] synthase from Mycoplasmoides gallisepticum (strain R(low / passage 15 / clone 2)) (Mycoplasma gallisepticum).